The following is a 240-amino-acid chain: Ribonuclease HII (240 aa).

The 209-residue stretch at 7-215 (RYAIGIDEAG…LKRIAPGWYV (209 aa)) folds into the RNase H type-2 domain. Aspartate 13, glutamate 14, and aspartate 112 together coordinate a divalent metal cation.

Belongs to the RNase HII family. Mn(2+) serves as cofactor. It depends on Mg(2+) as a cofactor.

The protein resides in the cytoplasm. The catalysed reaction is Endonucleolytic cleavage to 5'-phosphomonoester.. In terms of biological role, endonuclease that specifically degrades the RNA of RNA-DNA hybrids. The sequence is that of Ribonuclease HII from Hyperthermus butylicus (strain DSM 5456 / JCM 9403 / PLM1-5).